Here is a 478-residue protein sequence, read N- to C-terminus: Transposase for insertion sequence element IS231E (478 aa).

The protein belongs to the transposase 11 family.

Its function is as follows. Involved in the transposition of the insertion sequence. The polypeptide is Transposase for insertion sequence element IS231E (Bacillus thuringiensis subsp. finitimus).